A 300-amino-acid chain; its full sequence is MKTGNQFKTVALVGRSNTPGIAEPLATLADSIATLGFEVVFEGDTAREIGIAGYPALTPAEIGARADVAIVLGGDGTMLGIGRQLAPYRTPLIGINHGRLGFITDIAASDMQALVPVMLAGKFEREERSLLEARIVRDGEPIYHALAFNDVVVNRSGFSGMVELRASVDGRYMYNQRSDGLIVATPTGSTAYALSSAGPILHPQLAGIVLVPIAPHALSNRPIVLPDDSKIAIQIVGGRDVNVNFDMQSFTSLELNDTIEVRRSKHTVPFLHPIGYSYYTTLRKKLHWNEHASNEDDKAS.

Residue Asp75 is the Proton acceptor of the active site. Residues 75–76, 149–150, Arg177, Asp179, 190–195, Ala214, and Gln248 contribute to the NAD(+) site; these read DG, ND, and TAYALS.

The protein belongs to the NAD kinase family. A divalent metal cation is required as a cofactor.

The protein resides in the cytoplasm. The enzyme catalyses NAD(+) + ATP = ADP + NADP(+) + H(+). Functionally, involved in the regulation of the intracellular balance of NAD and NADP, and is a key enzyme in the biosynthesis of NADP. Catalyzes specifically the phosphorylation on 2'-hydroxyl of the adenosine moiety of NAD to yield NADP. This is NAD kinase from Burkholderia orbicola (strain MC0-3).